We begin with the raw amino-acid sequence, 279 residues long: Cytochrome c1 (279 aa).

The N-terminal stretch at 1–21 (MKKLLISAVSALVLGSGAAFA) is a signal peptide. 4 residues coordinate heme c: Cys-55, Cys-58, His-59, and Met-204. Residues 248 to 266 (MGLVAMVMLGLLSVMLYLT) traverse the membrane as a helical segment.

As to quaternary structure, the main subunits of complex b-c1 are: cytochrome b, cytochrome c1 and the Rieske protein. In terms of processing, binds 1 heme c group covalently per subunit.

It localises to the cell membrane. Functionally, component of the ubiquinol-cytochrome c reductase complex (complex III or cytochrome b-c1 complex), which is a respiratory chain that generates an electrochemical potential coupled to ATP synthesis. c1 functions as an electron donor to cytochrome c. The protein is Cytochrome c1 (petC) of Rhodobacter capsulatus (strain ATCC BAA-309 / NBRC 16581 / SB1003).